A 178-amino-acid polypeptide reads, in one-letter code: MKHTVEVMIPEAEIKARIAELGRQITERYKDSGSEMVLVGLLRGSFMFMADLCREVQVPHEVDFMTASSYGSGMSTTRDVKILKDLDEDIRGKDVLIVEDIIDSGNTLSKVREILGLREPKSLAICTLLDKPSRREVDVPVEFVGFSIPDEFVVGYGIDYAQRYRHLPYVGKVVLLDE.

Residues Arg43 and Gly44 each contribute to the diphosphate site. GMP is bound at residue Glu99. Residue Glu99 participates in IMP binding. Mg(2+)-binding residues include Glu99 and Asp100. Residue Asp103 is the Proton acceptor of the active site. GMP contacts are provided by residues 103 to 108 (DSGNTL), Lys131, and Asp159. IMP contacts are provided by residues 103–108 (DSGNTL) and Lys131. Arg165 provides a ligand contact to diphosphate.

It belongs to the purine/pyrimidine phosphoribosyltransferase family. Homotetramer. Requires Mg(2+) as cofactor.

It localises to the cytoplasm. It catalyses the reaction IMP + diphosphate = hypoxanthine + 5-phospho-alpha-D-ribose 1-diphosphate. The catalysed reaction is GMP + diphosphate = guanine + 5-phospho-alpha-D-ribose 1-diphosphate. The protein operates within purine metabolism; IMP biosynthesis via salvage pathway; IMP from hypoxanthine: step 1/1. In terms of biological role, purine salvage pathway enzyme which catalyzes the transfer of the ribosyl-5-phosphate group from 5-phospho-alpha-D-ribose 1-diphosphate (PRPP) to the N9 position of hypoxanthine to yield IMP (inosine 5'-monophosphate). To a lesser extent, can also act on guanine leading to GMP, but shows a highly less efficient activity with xanthine. The sequence is that of Hypoxanthine phosphoribosyltransferase (hpt) from Salmonella typhimurium (strain LT2 / SGSC1412 / ATCC 700720).